Consider the following 187-residue polypeptide: Ribosome-recycling factor (187 aa).

It belongs to the RRF family.

The protein resides in the cytoplasm. Its function is as follows. Responsible for the release of ribosomes from messenger RNA at the termination of protein biosynthesis. May increase the efficiency of translation by recycling ribosomes from one round of translation to another. This chain is Ribosome-recycling factor, found in Parvibaculum lavamentivorans (strain DS-1 / DSM 13023 / NCIMB 13966).